Consider the following 128-residue polypeptide: Large ribosomal subunit protein bL17 (128 aa).

The protein belongs to the bacterial ribosomal protein bL17 family. In terms of assembly, part of the 50S ribosomal subunit. Contacts protein L32.

The sequence is that of Large ribosomal subunit protein bL17 from Ehrlichia ruminantium (strain Gardel).